We begin with the raw amino-acid sequence, 576 residues long: MAPKSLAEQIADLEDLTPRDYDPEDIERGGNSSDEDVEVKDANAGREHYQAVGKAKLRNEGPVSLGKQYAGSRVSRDALEAESDEDPFRARSSDEESEDESDLEDEDEDGDEDEDEDISEGSEDERPSKSKAHSLKGREDADVGMDSDDSEEDEDGEGFDDGFSDEDEDISGEDDSEDDEDAKEEEEEEEEEEEEEEDDESEDEEEKTAKPKRRVQFANAKVADTSDDRAQLRQLLATDQKTIAATISQAAKADATKGRAVKHQRATFDALLNARIKLQKGLTAANQLATRTQPSEDADTDAFKSAETAALTLWSTLEDLRLTLVDAQTQDDSKKRKRPSPATTSTSTSSLWKRMAELESDSLAHRRAILDKWSLKVRGSATATTLANSKTKLLGTSGAQQTITAVLDAHVASETTDRSSKRLKSTQGSTSDPNEVKVYDDTIFYQSLLRDLVSQRMSSTDAITNGLDTLHILPSRNGAGAIHPITGMRKDKVKREVDTRASKGRKMRFDVHEKLQNFMAPEERGTWTKRAREEFFASLLGRSASGILREDDVSDDEDGEKSDEDVEEGGLRLFRS.

Disordered regions lie at residues 1-227, 328-351, 414-433, and 548-576; these read MAPK…DTSD, QTQD…TSSL, ETTD…TSDP, and LRED…LFRS. A compositionally biased stretch (basic and acidic residues) spans 39–49; that stretch reads VKDANAGREHY. Composition is skewed to acidic residues over residues 95–123 and 142–206; these read EESE…EGSE and DVGM…DEEE. Residues 552–568 are compositionally biased toward acidic residues; that stretch reads DVSDDEDGEKSDEDVEE.

Belongs to the AATF family.

Its subcellular location is the nucleus. The protein resides in the nucleolus. The polypeptide is Protein bfr2 (bfr2) (Emericella nidulans (strain FGSC A4 / ATCC 38163 / CBS 112.46 / NRRL 194 / M139) (Aspergillus nidulans)).